The chain runs to 3032 residues: Biorientation of chromosomes in cell division protein 1-like 1 (3032 aa).

Over residues 1–31 (MATNPQPQPPPPAPPPPPPQPQPPPPPPGPG) the composition is skewed to pro residues. Disordered regions lie at residues 1 to 48 (MATN…GAGD), 164 to 195 (EEAAGSTAPDDEKPESSVITQGAPAPGPSANV), 214 to 397 (NAAR…LDSD), and 409 to 465 (VHTS…RGVR). A compositionally biased stretch (gly residues) spans 32 to 46 (AGPGASGPGSAGAGA). Positions 234–243 (KLSSQPSTDV) are enriched in polar residues. Basic and acidic residues predominate over residues 244 to 261 (STDKERGSEDATEREKAT). S264 is modified (phosphoserine). Residues 310–391 (TDPKIKSMDK…RAAEGTKEDC (82 aa)) show a composition bias toward basic and acidic residues. The segment covering 416–441 (SFEEDTEEEVVVSESMEEGEITSEDE) has biased composition (acidic residues). K471 carries the post-translational modification N6-acetyllysine. Residues S480 and S482 each carry the phosphoserine modification. Disordered regions lie at residues 480 to 1153 (SDSD…HKAT), 1165 to 1296 (MVDS…HNSN), 1309 to 1366 (GGRA…LSED), 1424 to 1491 (AAGE…SGRR), 1675 to 1701 (GSLSSEDVDGSQENRIQVGPKKETEGT), 1740 to 1858 (AKPQ…GHAS), and 1934 to 1978 (ALAG…ISTG). Composition is skewed to basic and acidic residues over residues 488 to 503 (VEQRRQSIAKEKEERL) and 510 to 525 (REKLEEKRKQKAEKTK). K534 carries the N6-acetyllysine modification. Basic and acidic residues-rich tracts occupy residues 547–568 (LEPKAPRIKEVLKERKVLEKKV) and 578–653 (SRNV…EYKR). Residues S632 and S656 each carry the phosphoserine modification. T657 carries the post-translational modification Phosphothreonine. 3 stretches are compositionally biased toward basic and acidic residues: residues 668-736 (TDTR…DKPS), 743-768 (GDSVHKMSDETELHSSEKGETEESVR), and 799-846 (RDGK…KLQK). Positions 848–859 (ALSSKQHSVTSQ) are enriched in polar residues. 4 stretches are compositionally biased toward basic and acidic residues: residues 860-872 (KRSESCSEDKCET), 934-960 (KPDKEKNTEDNDTERQRKFKLEDRTSE), 978-1015 (AQKDSGHRAKLASIKEKHKTDKDSTSSKLERKVSDGHR), and 1022-1069 (SNKD…ENRR). S1071 is subject to Phosphoserine. The segment covering 1086–1096 (MSGTTSSSSLQ) has biased composition (polar residues). Phosphoserine is present on S1138. Positions 1272–1286 (STDSDLLSSSGSVTV) are enriched in low complexity. Positions 1312 to 1329 (ASTSLANHSDVPNQYSTV) are enriched in polar residues. Residues S1315 and S1364 each carry the phosphoserine modification. Composition is skewed to basic and acidic residues over residues 1428–1470 (HVVD…RRDS) and 1479–1491 (GKMERGAAGSGRR). Residues S1676 and S1685 each carry the phosphoserine modification. The segment covering 1958-1970 (HHSDSQLTRKETV) has biased composition (basic and acidic residues). Residues S1989, S2001, S2092, and S2166 each carry the phosphoserine modification. The interval 2082 to 2101 (PMPSAVSGENSQLTASRSEE) is disordered. Over residues 2088–2097 (SGENSQLTAS) the composition is skewed to polar residues. 4 disordered regions span residues 2303 to 2322 (EENQQATHNPEGNGGHLATK), 2370 to 2469 (EPSV…HCLT), 2536 to 2559 (EGGLPTKSDHSGTWTSEGSPEKMG), and 2575 to 2596 (DVTLPPEDNGCGVGNEESPPKG). Residues S2417 and S2443 each carry the phosphoserine modification. A compositionally biased stretch (basic and acidic residues) spans 2449 to 2459 (CLREPEQKPAE). The residue at position 2554 (S2554) is a Phosphoserine. S2681 bears the Phosphoserine mark. Residues 2682–3032 (TEALSGCSVE…DENPLKKAKR (351 aa)) are disordered. 2 stretches are compositionally biased toward acidic residues: residues 2692–2701 (ADPEEVEEEE) and 2715–2725 (SSEEELDDSPD). The segment covering 2727 to 2750 (LDSRIETAQRQYSETEPHDTKEEN) has biased composition (basic and acidic residues). The segment covering 2758-2769 (SSVTSKTNSSTG) has biased composition (polar residues). Over residues 2782–2804 (TGEKTEPNEDDGSIKSQEDDHPI) the composition is skewed to basic and acidic residues. A compositionally biased stretch (basic residues) spans 2805–2815 (IIKRRRGRPRK). Positions 2807 to 2819 (KRRRGRPRKYPAE) form a DNA-binding region, a.T hook. Residues 2822–2832 (FKSKEDSKTET) show a composition bias toward basic and acidic residues. Residues 2833–2843 (DITTVEQSSPS) are compositionally biased toward polar residues. A phosphoserine mark is found at S2840 and S2841. Over residues 2853-2867 (ESNKEIANLEEKSTS) the composition is skewed to basic and acidic residues. S2888 is subject to Phosphoserine. T2890 is subject to Phosphothreonine. S2892, S2898, and S2907 each carry phosphoserine. Glycyl lysine isopeptide (Lys-Gly) (interchain with G-Cter in ubiquitin) cross-links involve residues K2915 and K2916. The segment covering 2919-2932 (ESDEEEEEEEEEEP) has biased composition (acidic residues). A Phosphoserine modification is found at S2920. Residues 2975–2987 (LAKEKLSTSEKVS) show a composition bias toward basic and acidic residues. A Phosphoserine modification is found at S3000. A compositionally biased stretch (basic and acidic residues) spans 3020-3032 (QKVDENPLKKAKR).

Belongs to the BOD1 family. In terms of assembly, interacts (via COMPASS-Shg1 domain) with SETD1A at stalled replication forks; this interaction mediates FANCD2-dependent nucleosome remodeling at reversed forks protecting them from nucleolytic degradation.

Its subcellular location is the chromosome. Component of the fork protection machinery required to protect stalled/damaged replication forks from uncontrolled DNA2-dependent resection. Acts by stabilizing RAD51 at stalled replication forks and protecting RAD51 nucleofilaments from the antirecombinogenic activities of FBH1 and BLM. Does not regulate spindle orientation. In Mus musculus (Mouse), this protein is Biorientation of chromosomes in cell division protein 1-like 1.